We begin with the raw amino-acid sequence, 123 residues long: MAKPSYVKFEVPQELAEKALEAVEIARDTGRIRKGTNETTKAVERGQAKLVIIAEDVDPEEIVAHLPPLCEEKEIPYIYVPSKKELGAAAGLEVAAASVAIIEPGKARELVEDIAMKVKELMK.

Belongs to the eukaryotic ribosomal protein eL8 family. As to quaternary structure, part of the 50S ribosomal subunit. Probably part of the RNase P complex.

The protein localises to the cytoplasm. Multifunctional RNA-binding protein that recognizes the K-turn motif in ribosomal RNA, the RNA component of RNase P, box H/ACA, box C/D and box C'/D' sRNAs. This chain is Large ribosomal subunit protein eL8, found in Thermococcus gammatolerans (strain DSM 15229 / JCM 11827 / EJ3).